The sequence spans 59 residues: UPF0434 protein lpl1884 (59 aa).

Belongs to the UPF0434 family.

The sequence is that of UPF0434 protein lpl1884 from Legionella pneumophila (strain Lens).